The primary structure comprises 116 residues: uncharacterized protein (116 aa).

The Extracellular segment spans residues 1–46 (MGDNTTVAPGTNQTLVEEDLGAQITHTLMVQIMSKLNEMLTEYQPQ). N-linked (GlcNAc...) asparagine; by host glycans are attached at residues Asn-4 and Asn-12. A helical transmembrane segment spans residues 47–67 (IIGIGATVLAIFVIMFISLLI). The Cytoplasmic portion of the chain corresponds to 68-116 (ILGCNCIRPYNFKNLKRYITGKASKSVEYQPLKMSAVNMGMDEDDEFLA).

The protein localises to the host membrane. This is an uncharacterized protein from Magallana gigas (Pacific oyster).